The sequence spans 58 residues: Potassium channel toxin alpha-KTx 1.6 (58 aa).

A signal peptide spans 1–21 (MKISFLLLLAIVICSIGWTEA). Gln22 is modified (pyrrolidone carboxylic acid). 3 cysteine pairs are disulfide-bonded: Cys28-Cys49, Cys34-Cys54, and Cys38-Cys56.

It belongs to the short scorpion toxin superfamily. Potassium channel inhibitor family. Alpha-KTx 01 subfamily. In terms of tissue distribution, expressed by the venom gland.

It localises to the secreted. Its function is as follows. Potent blocker of both large-conductance calcium-activated potassium channels (KCa1.1/KCNMA1) and voltage-gated potassium channels (Kv1.3/KCNA3 and ERG1/Kv11.1/KCNH2). This Olivierus martensii (Manchurian scorpion) protein is Potassium channel toxin alpha-KTx 1.6.